The primary structure comprises 294 residues: 4-diphosphocytidyl-2-C-methyl-D-erythritol kinase (294 aa).

Residue K11 is part of the active site. P93–S103 contacts ATP. D135 is an active-site residue.

It belongs to the GHMP kinase family. IspE subfamily.

It catalyses the reaction 4-CDP-2-C-methyl-D-erythritol + ATP = 4-CDP-2-C-methyl-D-erythritol 2-phosphate + ADP + H(+). It functions in the pathway isoprenoid biosynthesis; isopentenyl diphosphate biosynthesis via DXP pathway; isopentenyl diphosphate from 1-deoxy-D-xylulose 5-phosphate: step 3/6. In terms of biological role, catalyzes the phosphorylation of the position 2 hydroxy group of 4-diphosphocytidyl-2C-methyl-D-erythritol. The protein is 4-diphosphocytidyl-2-C-methyl-D-erythritol kinase of Chlorobium phaeobacteroides (strain DSM 266 / SMG 266 / 2430).